The sequence spans 944 residues: Valine--tRNA ligase (944 aa).

The 'HIGH' region signature appears at 43–53 (PNVTGTLHMGH). The 'KMSKS' region signature appears at 550–554 (KMSKS). Lysine 553 contacts ATP. A coiled-coil region spans residues 878-944 (LVDMDAERTR…TGLREQRAKL (67 aa)).

The protein belongs to the class-I aminoacyl-tRNA synthetase family. ValS type 1 subfamily. As to quaternary structure, monomer.

The protein resides in the cytoplasm. The enzyme catalyses tRNA(Val) + L-valine + ATP = L-valyl-tRNA(Val) + AMP + diphosphate. Its function is as follows. Catalyzes the attachment of valine to tRNA(Val). As ValRS can inadvertently accommodate and process structurally similar amino acids such as threonine, to avoid such errors, it has a 'posttransfer' editing activity that hydrolyzes mischarged Thr-tRNA(Val) in a tRNA-dependent manner. This is Valine--tRNA ligase from Xanthomonas campestris pv. campestris (strain 8004).